A 356-amino-acid polypeptide reads, in one-letter code: 5-formaminoimidazole-4-carboxamide-1-(beta)-D-ribofuranosyl 5'-monophosphate synthetase (356 aa).

Histidine 27 and serine 94 together coordinate 5-amino-1-(5-phospho-beta-D-ribosyl)imidazole-4-carboxamide. The 233-residue stretch at 101–333 (TENFAELTVP…YADLIQEDLS (233 aa)) folds into the ATP-grasp domain. ATP is bound by residues 145-196 (PRDI…TRYY) and glutamate 226. 5-amino-1-(5-phospho-beta-D-ribosyl)imidazole-4-carboxamide is bound at residue asparagine 255. Residues glutamate 293 and glutamate 306 each coordinate Mg(2+).

It belongs to the phosphohexose mutase family. Mg(2+) is required as a cofactor. Mn(2+) serves as cofactor.

It catalyses the reaction 5-amino-1-(5-phospho-beta-D-ribosyl)imidazole-4-carboxamide + formate + ATP = 5-formamido-1-(5-phospho-D-ribosyl)imidazole-4-carboxamide + ADP + phosphate. It participates in purine metabolism; IMP biosynthesis via de novo pathway; 5-formamido-1-(5-phospho-D-ribosyl)imidazole-4-carboxamide from 5-amino-1-(5-phospho-D-ribosyl)imidazole-4-carboxamide (formate route): step 1/1. In terms of biological role, catalyzes the ATP- and formate-dependent formylation of 5-aminoimidazole-4-carboxamide-1-beta-d-ribofuranosyl 5'-monophosphate (AICAR) to 5-formaminoimidazole-4-carboxamide-1-beta-d-ribofuranosyl 5'-monophosphate (FAICAR) in the absence of folates. The chain is 5-formaminoimidazole-4-carboxamide-1-(beta)-D-ribofuranosyl 5'-monophosphate synthetase from Methanosarcina acetivorans (strain ATCC 35395 / DSM 2834 / JCM 12185 / C2A).